Consider the following 227-residue polypeptide: Uracil-DNA glycosylase (227 aa).

Asp-65 acts as the Proton acceptor in catalysis.

This sequence belongs to the uracil-DNA glycosylase (UDG) superfamily. UNG family.

Its subcellular location is the cytoplasm. The enzyme catalyses Hydrolyzes single-stranded DNA or mismatched double-stranded DNA and polynucleotides, releasing free uracil.. Excises uracil residues from the DNA which can arise as a result of misincorporation of dUMP residues by DNA polymerase or due to deamination of cytosine. This Lactobacillus delbrueckii subsp. bulgaricus (strain ATCC 11842 / DSM 20081 / BCRC 10696 / JCM 1002 / NBRC 13953 / NCIMB 11778 / NCTC 12712 / WDCM 00102 / Lb 14) protein is Uracil-DNA glycosylase.